A 1639-amino-acid polypeptide reads, in one-letter code: Protein GFS12 (1639 aa).

Positions 206-294 (LEEKSKLRCL…IRPSNILLSD (89 aa)) constitute a Protein kinase 1 domain. Residues 336–608 (LKISSHLDWQ…FHGFGVDNKR (273 aa)) enclose the BEACH domain. Residues 715–788 (IAGDIFSIGC…AKSLLDSPYF (74 aa)) enclose the Protein kinase 2 domain. WD repeat units follow at residues 1290-1333 (AHHG…CVSS) and 1336-1373 (AHEE…LISL). Residues 1377–1398 (SPSDQDQASSDPSSKNNSNPCN) show a composition bias toward low complexity. The segment at 1377-1399 (SPSDQDQASSDPSSKNNSNPCNR) is disordered. 3 WD repeats span residues 1465-1499 (ALCS…RLFD), 1511-1549 (AHDG…TPQP), and 1609-1639 (RVKS…RICC).

This sequence belongs to the protein kinase superfamily. Tyr protein kinase family. Interacts (via protein kinase 2 domain) with BCHC1 (via PH-BEACH domain). In terms of tissue distribution, weakly expressed in the cotyledons of germinating seedlings. Restricted to the vascular tissues of cotyledons. Detected in root tips, apical meristem, young flower buds and receptacles.

Its function is as follows. May act predominantly to suppress BCHC1, which itself is a negative factor in protein storage vacuole (PSV) trafficking regulation and plant effector triggered immunity (ETI). Required for ETI, but not for cell death. The chain is Protein GFS12 from Arabidopsis thaliana (Mouse-ear cress).